The sequence spans 163 residues: 3-isopropylmalate dehydratase small subunit 2 (163 aa).

The protein belongs to the LeuD family. LeuD type 2 subfamily. Heterodimer of LeuC and LeuD.

It catalyses the reaction (2R,3S)-3-isopropylmalate = (2S)-2-isopropylmalate. Its pathway is amino-acid biosynthesis; L-leucine biosynthesis; L-leucine from 3-methyl-2-oxobutanoate: step 2/4. Functionally, catalyzes the isomerization between 2-isopropylmalate and 3-isopropylmalate, via the formation of 2-isopropylmaleate. The sequence is that of 3-isopropylmalate dehydratase small subunit 2 (leuD2) from Pyrococcus abyssi (strain GE5 / Orsay).